The chain runs to 587 residues: Integrator complex subunit 14 (587 aa).

The VWFA domain occupies 3–113 (TLIALDASLS…NILQVVVFTD (111 aa)). Disordered regions lie at residues 190-211 (KSSD…KSEL) and 304-331 (REKS…DTSN).

Belongs to the Integrator subunit 14 family. Belongs to the multiprotein complex Integrator, at least composed of IntS1, IntS2, IntS3, IntS4, omd/IntS5, IntS6, defl/IntS7, IntS8, IntS9, IntS10, IntS11, IntS12, asun/IntS13, IntS14 and IntS15. The core complex associates with protein phosphatase 2A subunits mts/PP2A and Pp2A-29B, to form the Integrator-PP2A (INTAC) complex.

It is found in the nucleus. Its function is as follows. Component of the integrator complex, a multiprotein complex that terminates RNA polymerase II (Pol II) transcription in the promoter-proximal region of genes. The integrator complex provides a quality checkpoint during transcription elongation by driving premature transcription termination of transcripts that are unfavorably configured for transcriptional elongation: the complex terminates transcription by (1) catalyzing dephosphorylation of the C-terminal domain (CTD) of Pol II subunit Polr2A/Rbp1 and Spt5, and (2) degrading the exiting nascent RNA transcript via endonuclease activity. The integrator complex is also involved in the 3'-end processing of the U7 snRNA, and also the spliceosomal snRNAs U1, U2, U4 and U5. The protein is Integrator complex subunit 14 of Drosophila melanogaster (Fruit fly).